The following is a 359-amino-acid chain: Ferredoxin--NADP reductase (359 aa).

Asp48, Gln56, Tyr61, Ala101, Phe139, Asp304, and Ser345 together coordinate FAD. The tract at residues 340 to 359 is disordered; sequence VHTHTSNDTNLQSRLHAAAE. A compositionally biased stretch (polar residues) spans 341–352; that stretch reads HTHTSNDTNLQS.

The protein belongs to the ferredoxin--NADP reductase type 2 family. Homodimer. The cofactor is FAD.

The enzyme catalyses 2 reduced [2Fe-2S]-[ferredoxin] + NADP(+) + H(+) = 2 oxidized [2Fe-2S]-[ferredoxin] + NADPH. This Ralstonia nicotianae (strain ATCC BAA-1114 / GMI1000) (Ralstonia solanacearum) protein is Ferredoxin--NADP reductase.